We begin with the raw amino-acid sequence, 464 residues long: ATP synthase subunit beta (464 aa).

152 to 159 (GGAGVGKT) is a binding site for ATP.

The protein belongs to the ATPase alpha/beta chains family. In terms of assembly, F-type ATPases have 2 components, CF(1) - the catalytic core - and CF(0) - the membrane proton channel. CF(1) has five subunits: alpha(3), beta(3), gamma(1), delta(1), epsilon(1). CF(0) has three main subunits: a(1), b(2) and c(9-12). The alpha and beta chains form an alternating ring which encloses part of the gamma chain. CF(1) is attached to CF(0) by a central stalk formed by the gamma and epsilon chains, while a peripheral stalk is formed by the delta and b chains.

It localises to the cell membrane. The enzyme catalyses ATP + H2O + 4 H(+)(in) = ADP + phosphate + 5 H(+)(out). Produces ATP from ADP in the presence of a proton gradient across the membrane. The catalytic sites are hosted primarily by the beta subunits. This chain is ATP synthase subunit beta, found in Ureaplasma parvum serovar 3 (strain ATCC 27815 / 27 / NCTC 11736).